The chain runs to 378 residues: MARRYDELRHYPGITEHTTALASFSEAAPSVPRAPGPYTPHRPPQLQAPGLDSDSLKREKDDIYGHPLFPLLALVFEKCELATCSPRDGASAGLGSPPGGDVCSSDSFNEDIAAFAKQIRSERPLFSSNPELDNLMVQAIQVLRFHLLELEKVHDLCDNFCHRYITCLKGKMPIDLVIEDRDGSCREDLEDYAASCPSLPDQNTTWIRDHEDSGSVHLGTPGPSSGGLASQSGDNSSDQGDGLDTSVASPSSAGEDEDLDLERRRNKKRGIFPKVATNIMRAWLFQHLSHPYPSEEQKKQLAQDTGLTILQVNNWFINARRRIVQPMIDQSNRTGQGASFNPEGQPMAGFTETQPQVTVRTPGSMGMNLNLEGEWHYL.

Residues 24–57 (FSEAAPSVPRAPGPYTPHRPPQLQAPGLDSDSLK) are disordered. Residues 32–43 (PRAPGPYTPHRP) are compositionally biased toward pro residues. Positions 99-182 (GGDVCSSDSF…PIDLVIEDRD (84 aa)) constitute an MEIS N-terminal domain. A disordered region spans residues 203–265 (NTTWIRDHED…DEDLDLERRR (63 aa)). A compositionally biased stretch (low complexity) spans 230-244 (SQSGDNSSDQGDGLD). The segment at residues 265–327 (RNKKRGIFPK…NARRRIVQPM (63 aa)) is a DNA-binding region (homeobox; TALE-type).

This sequence belongs to the TALE/MEIS homeobox family. As to expression, expressed at high levels in the brain. Significant expression also observed in the heart, spleen and lung. Expressed in pancreatic islets (beta-cells and non-beta-cells).

The protein resides in the nucleus. Its function is as follows. Transcriptional regulator which directly modulates PDPK1 expression, thus promoting survival of pancreatic beta-cells. Also regulates expression of NDFIP1, BNIP3, and CCNG1. The protein is Homeobox protein Meis3 (Meis3) of Mus musculus (Mouse).